The following is a 334-amino-acid chain: MERCSVAQQFEDRFQRKFYYLRLSITDVCNFKCTYCLPDGYKPSAGRPASFLTVNEIRRVVSAFAHCGTSKVRITGGEPSLRKDFGEIIHTIAQTPGIQKVATTTNGYRLAKHIGEWREAGLTQLNVSVDSLDPRMFAQITGENRFQQVMSGIDRAFEVGFEQVKVNVVLMKNLNHLELPQFMAWIKTRPIQLRFIELMQTGEMDALFARHHVSGISIRDYLFGNGWLLKARADNDGPAQVFIHPDFQGEIGLIMPYEKDFCRSCNRLRVSALGKLHLCLFGEQGIELRDLLQDDHQENALIERIQTQLQNKAETHFLHDGNSGVTPHLASIGG.

One can recognise a Radical SAM core domain in the interval 13–239 (RFQRKFYYLR…KARADNDGPA (227 aa)). Position 22 (arginine 22) interacts with GTP. Positions 29 and 33 each coordinate [4Fe-4S] cluster. Tyrosine 35 provides a ligand contact to S-adenosyl-L-methionine. Cysteine 36 contributes to the [4Fe-4S] cluster binding site. Residue arginine 73 participates in GTP binding. S-adenosyl-L-methionine is bound at residue glycine 77. Threonine 104 is a binding site for GTP. Serine 128 lines the S-adenosyl-L-methionine pocket. Lysine 165 lines the GTP pocket. Residue methionine 199 coordinates S-adenosyl-L-methionine. Cysteine 262 and cysteine 265 together coordinate [4Fe-4S] cluster. 267–269 (RLR) provides a ligand contact to GTP. Cysteine 279 lines the [4Fe-4S] cluster pocket.

The protein belongs to the radical SAM superfamily. MoaA family. As to quaternary structure, monomer and homodimer. [4Fe-4S] cluster serves as cofactor.

The enzyme catalyses GTP + AH2 + S-adenosyl-L-methionine = (8S)-3',8-cyclo-7,8-dihydroguanosine 5'-triphosphate + 5'-deoxyadenosine + L-methionine + A + H(+). The protein operates within cofactor biosynthesis; molybdopterin biosynthesis. Catalyzes the cyclization of GTP to (8S)-3',8-cyclo-7,8-dihydroguanosine 5'-triphosphate. The sequence is that of GTP 3',8-cyclase from Vibrio cholerae serotype O1 (strain M66-2).